We begin with the raw amino-acid sequence, 356 residues long: Nicotinate-nucleotide--dimethylbenzimidazole phosphoribosyltransferase (356 aa).

Glu317 functions as the Proton acceptor in the catalytic mechanism.

Belongs to the CobT family. As to quaternary structure, homodimer.

It carries out the reaction 5,6-dimethylbenzimidazole + nicotinate beta-D-ribonucleotide = alpha-ribazole 5'-phosphate + nicotinate + H(+). Its pathway is nucleoside biosynthesis; alpha-ribazole biosynthesis; alpha-ribazole from 5,6-dimethylbenzimidazole: step 1/2. Its function is as follows. Catalyzes the synthesis of alpha-ribazole-5'-phosphate from nicotinate mononucleotide (NAMN) and 5,6-dimethylbenzimidazole (DMB). This chain is Nicotinate-nucleotide--dimethylbenzimidazole phosphoribosyltransferase, found in Salmonella agona (strain SL483).